A 423-amino-acid polypeptide reads, in one-letter code: MLRVRCLRGGSRGAEAVHYIGSRLGRTLTGWVQRTFQSTQAATASSRNSFAADDKATEPLPKDCPVSSYNEWDPLEEVIVGRAENARVPPFTIEVKANTYEKYWPFYQKHGGHYFPKDHLKKAVTEIEEMCNILKMEGVTVRRPDPIDWSLKYKTPDFESTGLYSAMPRDILIVVGNEIIEAPMAWRSRFFEYRAYRSIIKDYFHRGAKWTTAPKPTMADELYDRDYPIHSVEDRHKLAAQGKFVTTEFEPCFDAADFIRAGKDIFAQRSQVTNYLGIEWMRRHLAPDYRVHIISFKDPNPMHIDATFNIIGPGTVLSNPDRPCHQIDLFKKAGWTIITPPTPIIPDDHPLWMSSKWLSMNVLMLDEKRVMVDANEVPTQKMFEKLGITTIKVNIRNANSLGGGFHCWTCDVRRRGTLQSYLD.

The N-terminal 43 residues, 1–43 (MLRVRCLRGGSRGAEAVHYIGSRLGRTLTGWVQRTFQSTQAAT), are a transit peptide targeting the mitochondrion. Residues 43 to 63 (TASSRNSFAADDKATEPLPKD) form a disordered region. Serine 46 and serine 49 each carry phosphoserine. The segment covering 52–61 (ADDKATEPLP) has biased composition (basic and acidic residues). An arginine-binding site is contributed by aspartate 170. Residues aspartate 254 and histidine 303 contribute to the active site. Arginine contacts are provided by aspartate 305, arginine 322, serine 354, and serine 355. Residue lysine 385 is modified to N6-acetyllysine. Cysteine 407 functions as the Amidino-cysteine intermediate in the catalytic mechanism.

The protein belongs to the amidinotransferase family. As to quaternary structure, homodimer.

The protein resides in the mitochondrion inner membrane. It catalyses the reaction L-arginine + glycine = guanidinoacetate + L-ornithine. It carries out the reaction 4-aminobutanoate + L-arginine = 4-guanidinobutanoate + L-ornithine. The enzyme catalyses beta-alanine + L-arginine = 3-guanidinopropanoate + L-ornithine. The catalysed reaction is taurine + L-arginine = taurocyamine + L-ornithine. The protein operates within amine and polyamine biosynthesis; creatine biosynthesis; creatine from L-arginine and glycine: step 1/2. Functionally, transamidinase that catalyzes the transfer of the amidino group of L-arginine onto the amino moiety of acceptor metabolites such as glycine, beta-alanine, gamma-aminobutyric acid (GABA) and taurine yielding the corresponding guanidine derivatives. Catalyzes the rate-limiting step of creatine biosynthesis, namely the transfer of the amidino group from L-arginine to glycine to generate guanidinoacetate, which is then methylated by GAMT to form creatine. Provides creatine as a source for ATP generation in tissues with high energy demands, in particular skeletal muscle, heart and brain. The chain is Glycine amidinotransferase, mitochondrial (GATM) from Macaca fascicularis (Crab-eating macaque).